Consider the following 228-residue polypeptide: Orotidine 5'-phosphate decarboxylase (228 aa).

Residues aspartate 20, lysine 42, 70 to 79 (DFKVADIPET), serine 127, 180 to 190 (PGVGAQGGDPG), glycine 202, and arginine 203 contribute to the substrate site. Lysine 72 functions as the Proton donor in the catalytic mechanism.

This sequence belongs to the OMP decarboxylase family. Type 1 subfamily. As to quaternary structure, homodimer.

The enzyme catalyses orotidine 5'-phosphate + H(+) = UMP + CO2. It functions in the pathway pyrimidine metabolism; UMP biosynthesis via de novo pathway; UMP from orotate: step 2/2. Its function is as follows. Catalyzes the decarboxylation of orotidine 5'-monophosphate (OMP) to uridine 5'-monophosphate (UMP). The protein is Orotidine 5'-phosphate decarboxylase (pyrF) of Methanothermobacter thermautotrophicus (strain ATCC 29096 / DSM 1053 / JCM 10044 / NBRC 100330 / Delta H) (Methanobacterium thermoautotrophicum).